The primary structure comprises 177 residues: Ribosome maturation factor RimM (177 aa).

The PRC barrel domain occupies 98-177; it reads GEEFYWRELY…RIEVDWDPGF (80 aa).

Belongs to the RimM family. As to quaternary structure, binds ribosomal protein uS19.

It is found in the cytoplasm. Its function is as follows. An accessory protein needed during the final step in the assembly of 30S ribosomal subunit, possibly for assembly of the head region. Essential for efficient processing of 16S rRNA. May be needed both before and after RbfA during the maturation of 16S rRNA. It has affinity for free ribosomal 30S subunits but not for 70S ribosomes. This Photobacterium profundum (strain SS9) protein is Ribosome maturation factor RimM.